The following is a 647-amino-acid chain: Leucine-rich repeat and WD repeat-containing protein 1 (647 aa).

LRR repeat units follow at residues 22–43 (KIRS…PKLL), 48–69 (QLQE…LGLS), 70–91 (HLRV…CQFP), and 92–113 (KLEE…LKVS). Positions 204 to 267 (RTQVQKANSP…GSPVAGSDGS (64 aa)) are disordered. A phosphoserine mark is found at Ser-212, Ser-243, Ser-251, Ser-259, and Ser-264. 7 WD repeats span residues 282 to 335 (HSKN…LHKY), 341 to 379 (EFFS…LLHV), 383 to 422 (FCCG…LWDI), 426 to 472 (NQDY…CWDV), 484 to 526 (EVEF…LWSW), 542 to 582 (VVLA…LYDV), and 598 to 646 (APTQ…IWGR).

The protein belongs to the LRWD1 family. As to quaternary structure, integral component of the ORC complex. Directly interacts with CDT1, GMNN and ORC2. Interacts with ORC2 only when non-ubiquitinated; this interaction prevents LRWD1 ubiquitination and degradation. Some of these interactions are regulated in a cell-cycle dependent manner. Interaction with ORC1 occurs predominantly during G1. Association with phosphorylated ORC1 during mitosis is not efficient. Interaction with CDT1 occurs during G1 phase, as well as during mitosis with phosphorylated CDT1. Interaction with GMNN occurs from G1/S to mitosis. Interaction with ORC2 is observed throughout the cell cycle. The stoichiometry of the ORCA/ORC/CDT1/GMNN complex is 1:1:1:2. Interacts with CUL4A and DDB1; this interaction may lead to ubiquitination. In terms of processing, ubiquitinated; undergoes 'Lys-48'-linked polyubiquitination leading to proteasomal degradation. Ubiquitination occurs within the WD repeats at the end of the G1 phase. Ubiquitination may be catalyzed by the CUL4-DDB1 E3 ubiquitin-protein ligase complex and other E3 ligases. In terms of tissue distribution, testis-specific. Drastically down-regulated in testis from patients with Sertoli cell-only syndrome (SCOS).

The protein localises to the nucleus. Its subcellular location is the chromosome. The protein resides in the centromere. It is found in the telomere. It localises to the cytoplasm. The protein localises to the cytoskeleton. Its subcellular location is the microtubule organizing center. The protein resides in the centrosome. It is found in the kinetochore. In terms of biological role, required for G1/S transition. Recruits and stabilizes the origin recognition complex (ORC) onto chromatin during G1 to establish pre-replication complex (preRC) and to heterochromatic sites in post-replicated cells. Binds a combination of DNA and histone methylation repressive marks on heterochromatin. Binds histone H3 and H4 trimethylation marks H3K9me3, H3K27me3 and H4K20me3 in a cooperative manner with DNA methylation. Required for silencing of major satellite repeats. May be important ORC2, ORC3 and ORC4 stability. This is Leucine-rich repeat and WD repeat-containing protein 1 (LRWD1) from Homo sapiens (Human).